The chain runs to 793 residues: Short transient receptor potential channel 1 (793 aa).

A disordered region spans residues 1–30 (MMAALYPSTDLSGASSSSLPSSPSSSSPNE). The Cytoplasmic portion of the chain corresponds to 1 to 345 (MMAALYPSTD…FGQMSGYRRK (345 aa)). Residues 15–28 (SSSSLPSSPSSSSP) show a composition bias toward low complexity. ANK repeat units follow at residues 46-75 (LNEK…SGDL), 83-109 (LGRN…YGCQ), 111-156 (ADAL…EYST), and 158-180 (MDVA…MLLK). His189, Cys193, Cys195, and Cys198 together coordinate Zn(2+). The segment at residues 346 to 379 (PTCKKIMTVLTVGIFWPVLSLCYLIAPKSQFGRI) is an intramembrane region (discontinuously helical). At 380-386 (IHTPFMK) the chain is on the cytoplasmic side. Residues 387–404 (FIIHGASYFTFLLLLNLY) form a helical membrane-spanning segment. The Extracellular portion of the chain corresponds to 405 to 422 (SLVYHEDKKNTMGPALER). The helical transmembrane segment at 423 to 439 (IDYLLILWIIGMIWSDI) threads the bilayer. The Cytoplasmic portion of the chain corresponds to 440–455 (KRLWYEGLEDFLEESR). The chain crosses the membrane as a helical span at residues 456 to 475 (NQLSFVMNSLYLATFALKEE). The Extracellular portion of the chain corresponds to 476–496 (AHNKFHDFADRKDWDAFHPTL). Residues 497-517 (VAEGLFAFANVLSYLRLFFYV) form a helical membrane-spanning segment. Residues 518 to 536 (YTSSILGPLQISMGRMLQD) lie on the Cytoplasmic side of the membrane. The helical transmembrane segment at 537-558 (FGKFLGMFLLVLFSFTIGLTQL) threads the bilayer. The Extracellular portion of the chain corresponds to 559–623 (YDKGYTPKEQ…GEELQSFVGA (65 aa)). Cysteines 571 and 576 form a disulfide. A helical membrane pass occupies residues 624-644 (FIVGTYNVVVVIVLTKLLVAM). The Cytoplasmic portion of the chain corresponds to 645 to 793 (LHKSFQLIAN…SKYAMFYPRN (149 aa)).

Belongs to the transient receptor (TC 1.A.4) family. STrpC subfamily. TRPC1 sub-subfamily. In terms of assembly, heterotetramer with TRPC4 and/or TRPC5. Forms a heteromeric ion channel with TRPC4, with a 1:3 TRPC1:TRPC4 stoichiometry. Unlike other TRP channel proteins, does not form a homomeric channel. Interacts with TRPC4AP. Interacts with ITPR3. Interacts with MX1 and RNF24. Interacts with FKBP4. Interacts with PLSCR1. Interacts with PKD2L2. Forms a heterotetramer with PKD2 with a 2:2 stoichiometry; has distinct channel properties separate from PKD2 or TRPC1 homomers alone. Post-translationally, activation of PRKCA induces phosphorylation of TRPC1 and subsequent Ca2+ entry into cells.

Its subcellular location is the cell membrane. The catalysed reaction is Ca(2+)(in) = Ca(2+)(out). It catalyses the reaction Na(+)(in) = Na(+)(out). The enzyme catalyses Li(+)(in) = Li(+)(out). It carries out the reaction Cs(+)(in) = Cs(+)(out). With respect to regulation, may be operated by a phosphatidylinositol second messenger system activated by receptor tyrosine kinases or G-protein coupled receptors. Also activated by intracellular calcium store depletion. Functionally, forms a receptor-activated non-selective calcium permeant cation channel. Forms a heteromeric ion channel with TRPC4 or TRPC5 that has reduced calcium permeability compared to the homomeric TRPC4 or TRPC5 channel. Also permeable to monovalent ions including sodium, lithium and cesium ions. This chain is Short transient receptor potential channel 1 (TRPC1), found in Bos taurus (Bovine).